A 111-amino-acid polypeptide reads, in one-letter code: Putative pterin-4-alpha-carbinolamine dehydratase (111 aa).

The protein belongs to the pterin-4-alpha-carbinolamine dehydratase family.

It catalyses the reaction (4aS,6R)-4a-hydroxy-L-erythro-5,6,7,8-tetrahydrobiopterin = (6R)-L-erythro-6,7-dihydrobiopterin + H2O. The chain is Putative pterin-4-alpha-carbinolamine dehydratase from Chlorobaculum tepidum (strain ATCC 49652 / DSM 12025 / NBRC 103806 / TLS) (Chlorobium tepidum).